The primary structure comprises 318 residues: Methenyltetrahydromethanopterin cyclohydrolase (318 aa).

Belongs to the MCH family.

The protein localises to the cytoplasm. The catalysed reaction is 5,10-methenyl-5,6,7,8-tetrahydromethanopterin + H2O = N(5)-formyl-5,6,7,8-tetrahydromethanopterin + H(+). Its pathway is one-carbon metabolism; methanogenesis from CO(2); 5,10-methenyl-5,6,7,8-tetrahydromethanopterin from CO(2): step 3/3. Catalyzes the reversible interconversion of 5-formyl-H(4)MPT to methenyl-H(4)MPT(+). The polypeptide is Methenyltetrahydromethanopterin cyclohydrolase (Methanocella arvoryzae (strain DSM 22066 / NBRC 105507 / MRE50)).